Here is a 216-residue protein sequence, read N- to C-terminus: Neural cell adhesion molecule L1.2 (216 aa).

Residues 1 to 64 (EFFIHYLRKD…QTAGARVMEV (64 aa)) enclose the Fibronectin type-III domain. Residues 1 to 73 (EFFIHYLRKD…VKSGFVTESW (73 aa)) are Extracellular-facing. N22 and N46 each carry an N-linked (GlcNAc...) asparagine glycan. A helical transmembrane segment spans residues 74–94 (FIGLISALVLLLLVLLILCFI). Over 95-216 (KRSKGGKYSV…GLPNSAALLD (122 aa)) the chain is Cytoplasmic. Disordered stretches follow at residues 127–149 (YRSL…CEDS) and 173–216 (DESL…ALLD). The span at 128-139 (RSLESDNEEKRT) shows a compositional bias: basic and acidic residues.

The protein belongs to the immunoglobulin superfamily. L1/neurofascin/NgCAM family. As to expression, expressed in many postmitotic neurons in 16-36 hours embryos. Little or no expression in the olfactory placode, the anterior lateral line/acoustic ganglia complex, the posterior lateral line ganglion, late-developing hindbrain neurons and some Rohon-Beard cells in the spinal cord.

The protein resides in the cell membrane. It localises to the cell projection. The protein localises to the growth cone. In terms of biological role, cell adhesion molecule with an important role in the development of the nervous system. Involved in neuron-neuron adhesion, neurite fasciculation, outgrowth of neurites, etc. Binds to axonin on neurons. The sequence is that of Neural cell adhesion molecule L1.2 (nadl1.2) from Danio rerio (Zebrafish).